We begin with the raw amino-acid sequence, 670 residues long: Probable potassium transport system protein Kup 1 (670 aa).

13 consecutive transmembrane segments (helical) span residues 14 to 34, 58 to 78, 101 to 121, 147 to 167, 175 to 195, 196 to 216, 220 to 240, 252 to 272, 294 to 314, 345 to 365, 374 to 394, 403 to 423, and 427 to 447; these read GAGF…SPLY, LSLI…WIAL, WLII…ALTP, LPIV…QRFG, FGPV…INLF, GDFS…LLSP, AGIF…ALYS, VSWP…GAWL, LIIF…QALI, LYIP…VVYF, AYGL…TVYL, VLVG…FAAS, and FMHG…VMAI.

Belongs to the HAK/KUP transporter (TC 2.A.72) family.

The protein localises to the cell membrane. It catalyses the reaction K(+)(in) + H(+)(in) = K(+)(out) + H(+)(out). Transport of potassium into the cell. Likely operates as a K(+):H(+) symporter. In Lactococcus lactis subsp. lactis (strain IL1403) (Streptococcus lactis), this protein is Probable potassium transport system protein Kup 1.